The following is a 568-amino-acid chain: DNA ligase (568 aa).

Glutamate 249 contributes to the ATP binding site. Catalysis depends on lysine 251, which acts as the N6-AMP-lysine intermediate. The ATP site is built by arginine 256, arginine 271, glutamate 301, phenylalanine 342, arginine 418, and lysine 424.

The protein belongs to the ATP-dependent DNA ligase family. Mg(2+) serves as cofactor.

It catalyses the reaction ATP + (deoxyribonucleotide)n-3'-hydroxyl + 5'-phospho-(deoxyribonucleotide)m = (deoxyribonucleotide)n+m + AMP + diphosphate.. Functionally, DNA ligase that seals nicks in double-stranded DNA during DNA replication, DNA recombination and DNA repair. The chain is DNA ligase from Methanocella arvoryzae (strain DSM 22066 / NBRC 105507 / MRE50).